Consider the following 547-residue polypeptide: MAAKDVRFSSDARDRMLRGIDILNNAVKVTLGPKGRNVVIEKSFGAPRITKDGVTVAKEIELSDKFENLGAQLIREVASKQNDAAGDGTTTATILAASIVREGTKAVAAGLNPMDLKRGIDIAVAAVVADLKANSKKVTSNEEIAQVGTISANGDKSVGEMISTAMQKVGNEGVITVEEAKSLETELDVVEGMQFDRGYLSPYFITNAEKMIAELEDPFILVHEKKLSSLQALLPVLEAVVQSGKPLVIIAEDVEGEALATLVVNKLRGGLKVAAVKAPGFGDRRKAMLEDIAILTSGTLISEEIGIKLENVTLQMLGRAKRIRIDKESTTIIDGAGAKGEIEARIAQIKSQIAETTSDYDREKMQERLAKLAGGVAVIRVGGASEVEVKEKKDRVDDALNATRAAVEEGVLPGGGVALLRAIKALEGLTVENADQKTGVDIVRKAIQTPARQIVDNSGGDGAVVVGKLIENPSYAYGYNAQTDEYGDLVKLGIIDPTKVVRTALQDAASVGGLLITTEAIIAEQPKKDSPAMPGGGGMGGMGGMDF.

Residues 30–33 (TLGP), Lys-51, 87–91 (DGTTT), Gly-415, and Asp-496 contribute to the ATP site. Residues 527 to 547 (KKDSPAMPGGGGMGGMGGMDF) are disordered. Residues 534–547 (PGGGGMGGMGGMDF) are compositionally biased toward gly residues.

It belongs to the chaperonin (HSP60) family. Forms a cylinder of 14 subunits composed of two heptameric rings stacked back-to-back. Interacts with the co-chaperonin GroES.

It localises to the cytoplasm. It carries out the reaction ATP + H2O + a folded polypeptide = ADP + phosphate + an unfolded polypeptide.. Its function is as follows. Together with its co-chaperonin GroES, plays an essential role in assisting protein folding. The GroEL-GroES system forms a nano-cage that allows encapsulation of the non-native substrate proteins and provides a physical environment optimized to promote and accelerate protein folding. The chain is Chaperonin GroEL from Methylocella silvestris (strain DSM 15510 / CIP 108128 / LMG 27833 / NCIMB 13906 / BL2).